A 593-amino-acid polypeptide reads, in one-letter code: MAGGLLQLVAYGAQDVYLTGNPMITFFKVVYRRHTNFAVESIEQFFGGNLGFGKKSSAEINRSGDLITQVFLKVTLPEVRYCGDFTNFGHVEFAWVRNIGHAIVEETELEIGGSPIDKHYGDWLQIWQDVSSSKDHEKGLAKMLGDVPELTSISTLSWDVPDNTVLKPSYTLYVPLQFYFNRNNGLALPLIALQYHQVRIYVKFRQADQCYIASDAFKSGCGNLQLDDVSLYVNYVFLDTEERRRFAQVSHEYLIEQLQFTGEESAGSSNSAKYKLNFNHPVKAIYWVTKLGNYQGGKFMTYDPVCWENARENAAKLLLLAQYDLDDWGYFQEPGGYECEGNDGRSYVGDCGVQYTAVDPSNPSEEPSYIFNDTTTAEAFDGSLLIGKLAPCVPLLKRNKDVDLKDKVEGIIRIHTDFENDRMKYPEVEKITRNDLTLHDLSVPISKYDVDNRVDYIKKFDVTVWQHNNFGLLIDGSGNPTHEAELQLNGQPRQSKRGGIWYDTVNPTVHHTKSPRDGVNVFSFALNPEEHQPSCTCNFSRIDTAQLNLWFQHFTNHKFADVFADNDNKVLIFAVNYNVLRMLSGMAGLAYSN.

The protein belongs to the NCLDV major capsid protein family.

It is found in the virion. The polypeptide is Capsid protein 1 (Acanthamoeba polyphaga mimivirus (APMV)).